Here is a 1360-residue protein sequence, read N- to C-terminus: Activating molecule in BECN1-regulated autophagy protein 1B (1360 aa).

WD repeat units lie at residues 50-89 (DNPRSTFLLAFSPDRNLVASTHVNHNIYITDVKTGKCLHS), 92-132 (GHRR…ESWF), and 134-174 (ESNV…AVVK). Positions 249-258 (RSSGAQANDQ) are enriched in polar residues. Disordered regions lie at residues 249-277 (RSSGAQANDQSRPAPEPREPPSIPRFQYP), 315-364 (PTGL…NSAH), 412-490 (GVET…QRNN), 514-573 (ELER…RCRS), 587-616 (WERSGQTSSSSSSQEGPSWPLSVPPFEDPG), 664-688 (PTVSASSEAAEDALNPEVPVDNPDE), and 754-796 (TLSN…MPRN). The segment covering 319–333 (QPSDSTQPQTQSGPS) has biased composition (low complexity). Polar residues predominate over residues 350–361 (AFSSVFSGTAGN). A compositionally biased stretch (low complexity) spans 428-437 (SSSSMDLLSL). 2 stretches are compositionally biased toward polar residues: residues 443-454 (GSSSSPIYTSAT) and 473-490 (DGTSSGHHPFYDNTQRNN). Residues 590–607 (SGQTSSSSSSQEGPSWPL) are compositionally biased toward low complexity. Over residues 754–768 (TLSNSQADSQSNNPS) the composition is skewed to polar residues. The segment covering 775-784 (SDGDYEDIEE) has biased composition (acidic residues). Short sequence motifs (TQT motif) lie at residues 1109 to 1111 (TQT) and 1121 to 1123 (TQT). Disordered stretches follow at residues 1120–1142 (ETQTERELPSASTFQNTHTTSRH) and 1241–1360 (SQTS…LYGR). 2 stretches are compositionally biased toward polar residues: residues 1129-1142 (SASTFQNTHTTSRH) and 1241-1252 (SQTSVRTAQGGN). A compositionally biased stretch (low complexity) spans 1278–1288 (APGPSGSSGAP). The segment covering 1311 to 1321 (FGDRQPDDVQR) has biased composition (basic and acidic residues). Positions 1329-1347 (NMSNHSNNNNNDHSNSYSE) are enriched in low complexity. Positions 1348–1360 (SRSRDYPDDLYGR) are enriched in basic and acidic residues.

This sequence belongs to the WD repeat AMBRA1 family. Component of the DCX(AMBRA1) E3 ubiquitin ligase complex.

It localises to the endoplasmic reticulum. The protein localises to the cytoplasm. It is found in the cytoskeleton. The protein resides in the cytoplasmic vesicle. Its subcellular location is the autophagosome. It localises to the mitochondrion. The protein localises to the cytosol. It is found in the nucleus. The protein resides in the cell junction. Its subcellular location is the focal adhesion. Its pathway is protein modification; protein ubiquitination. In terms of biological role, substrate-recognition component of a DCX (DDB1-CUL4-X-box) E3 ubiquitin-protein ligase complex involved in cell cycle control and autophagy. The DCX(AMBRA1) complex specifically mediates the polyubiquitination of target proteins. Acts as an upstream master regulator of the transition from G1 to S cell phase: ambra1b specifically recognizes and binds phosphorylated cyclin-D (ccnd1, ccnd2 and ccnd3), leading to cyclin-D ubiquitination by the DCX(AMBRA1) complex and subsequent degradation. Acts as a regulator of Cul5-RING (CRL5) E3 ubiquitin-protein ligase complexes by mediating ubiquitination and degradation of Elongin-C (eloc) component of CRL5 complexes. Acts as a key regulator of autophagy by modulating the BECN1-PIK3C3 complex: controls protein turnover during neuronal development, and regulates normal cell survival and proliferation. In normal conditions, ambra1b is tethered to the cytoskeleton via interaction with dyneins light chains. Upon autophagy induction, ambra1b is released from the cytoskeletal docking site to induce autophagosome nucleation by mediating ubiquitination of proteins involved in autophagy. Also acts as an activator of mitophagy. Required for skeletal muscle development. This is Activating molecule in BECN1-regulated autophagy protein 1B from Danio rerio (Zebrafish).